The following is a 202-amino-acid chain: Keratin-associated protein 5-10 (202 aa).

7 repeat units span residues C48 to P51, C54 to P57, C144 to P147, C162 to P165, C172 to P175, C182 to P185, and C192 to P195. The interval C48–P195 is 7 X 4 AA repeats of C-C-X-P.

This sequence belongs to the KRTAP type 5 family. Interacts with hair keratins. Expressed in hair root but not in skin. Expressed also in brain and skeletal muscle.

Functionally, in the hair cortex, hair keratin intermediate filaments are embedded in an interfilamentous matrix, consisting of hair keratin-associated protein (KRTAP), which are essential for the formation of a rigid and resistant hair shaft through their extensive disulfide bond cross-linking with abundant cysteine residues of hair keratins. The matrix proteins include the high-sulfur and high-glycine-tyrosine keratins. The chain is Keratin-associated protein 5-10 (KRTAP5-10) from Homo sapiens (Human).